The chain runs to 124 residues: UPF0342 protein DSY2926 (124 aa).

This sequence belongs to the UPF0342 family.

This chain is UPF0342 protein DSY2926, found in Desulfitobacterium hafniense (strain Y51).